We begin with the raw amino-acid sequence, 246 residues long: Probable transcriptional regulatory protein ESA_01378 (246 aa).

It belongs to the TACO1 family.

The protein localises to the cytoplasm. This chain is Probable transcriptional regulatory protein ESA_01378, found in Cronobacter sakazakii (strain ATCC BAA-894) (Enterobacter sakazakii).